Reading from the N-terminus, the 492-residue chain is Ketol-acid reductoisomerase (NADP(+)) (492 aa).

Positions 14–208 (LDQLGRCRFM…GGHKAGVLES (195 aa)) constitute a KARI N-terminal Rossmann domain. NADP(+) contacts are provided by residues 45–48 (CGAQ), arginine 68, arginine 76, serine 78, and 108–110 (DKQ). Histidine 132 is a catalytic residue. NADP(+) is bound at residue glycine 158. 2 KARI C-terminal knotted domains span residues 209-344 (SFVA…NAPK) and 345-485 (YDGK…MTDM). Mg(2+) contacts are provided by aspartate 217, glutamate 221, glutamate 389, and glutamate 393. Serine 414 contributes to the substrate binding site.

The protein belongs to the ketol-acid reductoisomerase family. The cofactor is Mg(2+).

The enzyme catalyses (2R)-2,3-dihydroxy-3-methylbutanoate + NADP(+) = (2S)-2-acetolactate + NADPH + H(+). It catalyses the reaction (2R,3R)-2,3-dihydroxy-3-methylpentanoate + NADP(+) = (S)-2-ethyl-2-hydroxy-3-oxobutanoate + NADPH + H(+). It participates in amino-acid biosynthesis; L-isoleucine biosynthesis; L-isoleucine from 2-oxobutanoate: step 2/4. The protein operates within amino-acid biosynthesis; L-valine biosynthesis; L-valine from pyruvate: step 2/4. Functionally, involved in the biosynthesis of branched-chain amino acids (BCAA). Catalyzes an alkyl-migration followed by a ketol-acid reduction of (S)-2-acetolactate (S2AL) to yield (R)-2,3-dihydroxy-isovalerate. In the isomerase reaction, S2AL is rearranged via a Mg-dependent methyl migration to produce 3-hydroxy-3-methyl-2-ketobutyrate (HMKB). In the reductase reaction, this 2-ketoacid undergoes a metal-dependent reduction by NADPH to yield (R)-2,3-dihydroxy-isovalerate. The sequence is that of Ketol-acid reductoisomerase (NADP(+)) from Haemophilus influenzae (strain PittGG).